A 263-amino-acid polypeptide reads, in one-letter code: Peptide methionine sulfoxide reductase A4, chloroplastic (263 aa).

The N-terminal 75 residues, 1–75, are a transit peptide targeting the chloroplast; that stretch reads MPPLLASTSS…GLGGLGGSPR (75 aa).

This sequence belongs to the MsrA Met sulfoxide reductase family. Expressed in roots, stems, leaves and flowers.

It is found in the plastid. It localises to the chloroplast. The enzyme catalyses L-methionyl-[protein] + [thioredoxin]-disulfide + H2O = L-methionyl-(S)-S-oxide-[protein] + [thioredoxin]-dithiol. It catalyses the reaction [thioredoxin]-disulfide + L-methionine + H2O = L-methionine (S)-S-oxide + [thioredoxin]-dithiol. Its function is as follows. Catalyzes the reduction of methionine sulfoxide (MetSO) to methionine in proteins. Involved in abiotic and salt stress responses. Plays a protective role against oxidative stress by restoring activity to proteins that have been inactivated by methionine oxidation. MSRA family specifically reduces the MetSO S-enantiomer. The sequence is that of Peptide methionine sulfoxide reductase A4, chloroplastic from Oryza sativa subsp. japonica (Rice).